The following is a 266-amino-acid chain: Enoyl-CoA hydratase EchA19 (266 aa).

Glu-120 is an active-site residue. Residue Lys-135 is modified to N6-succinyllysine. Glu-140 is an active-site residue. The residue at position 142 (Lys-142) is an N6-succinyllysine.

The protein belongs to the enoyl-CoA hydratase/isomerase family. Homotrimer; substrate probably binds in elongated tunnels between the subunits. Succinylated in vitro at pH 8.1, succinylation reduces specific activity of the enzyme 5.5-fold; succinyl-CoA is a downstream by-product of cholesterol degradation. Can be de-succinylated in vitro by NAD-dependent protein deacylase (AC P9WGG3). Succinylation may be a negative feedback regulator of cholesterol metabolism.

It catalyses the reaction (22E)-3-oxochola-4,22-dien-24-oyl-CoA + H2O = (22R)-hydroxy-3-oxo-chol-4-ene-24-oyl-CoA. It participates in steroid metabolism; cholesterol degradation. Its function is as follows. Degradation of the cholesterol side chain involves 3 multistep beta-oxidation cycles, this may be involved in the second cycle. Hydrates 3-OCDO-CoA ((22E)-3-oxo-chol-4,22-dien-24-oyl-CoA) to make (22R)-HOCO-CoA (3-oxo-chol-4-ene-(22R)-hydroxy-24-oyl-CoA). Also acts on octenoyl-CoA. Not active on (E)-3-OCDS-CoA ((E)-3-oxocholest-4,24-dien-26-oyl-CoA) or 3-OPDC-CoA (3-oxo-4,17-pregnadiene-20-carboxyl-CoA). Hydrates the same substrate as ChsH3, but the 2 enzymes make different stereoisomers of the product. This Mycobacterium tuberculosis (strain ATCC 25618 / H37Rv) protein is Enoyl-CoA hydratase EchA19.